The primary structure comprises 507 residues: Dihydrolipoyllysine-residue acetyltransferase component of pyruvate dehydrogenase complex, mitochondrial (507 aa).

Residues 77 to 153 enclose the Lipoyl-binding domain; it reads HNRVALPALS…PIGKLLCIIV (77 aa). The residue at position 118 (K118) is an N6-lipoyllysine. Disordered stretches follow at residues 168–223 and 248–270; these read DGAS…VSAS and RILA…TQAV. The Peripheral subunit-binding (PSBD) domain occupies 221–258; the sequence is SASPFAKKLAAENGLDLSGVSGSGPGGRILASDLSQAP. Active-site residues include H480 and D484.

It belongs to the 2-oxoacid dehydrogenase family. (R)-lipoate serves as cofactor.

The protein localises to the mitochondrion matrix. It catalyses the reaction N(6)-[(R)-dihydrolipoyl]-L-lysyl-[protein] + acetyl-CoA = N(6)-[(R)-S(8)-acetyldihydrolipoyl]-L-lysyl-[protein] + CoA. In terms of biological role, the pyruvate dehydrogenase complex catalyzes the overall conversion of pyruvate to acetyl-CoA and CO(2). It contains multiple copies of three enzymatic components: pyruvate dehydrogenase (E1), dihydrolipoamide acetyltransferase (E2) and lipoamide dehydrogenase (E3). This chain is Dihydrolipoyllysine-residue acetyltransferase component of pyruvate dehydrogenase complex, mitochondrial, found in Caenorhabditis elegans.